Here is a 263-residue protein sequence, read N- to C-terminus: Esterase mokD (263 aa).

Active-site charge relay system residues include serine 134, aspartate 208, and histidine 236.

It belongs to the LovG family.

The catalysed reaction is dihydromonacolin L-[lovastatin nonaketide synthase] + H2O = holo-[lovastatin nonaketide synthase] + dihydromonacolin L carboxylate + H(+). The protein operates within polyketide biosynthesis; lovastatin biosynthesis. In terms of biological role, esterase; part of the gene cluster that mediates the biosynthesis of monakolin K, also known as lovastatin, and which acts as a potent competitive inhibitor of HMG-CoA reductase. Monakolin K biosynthesis is performed in two stages. The first stage is catalyzed by the nonaketide synthase mokA, which belongs to type I polyketide synthases and catalyzes the iterative nine-step formation of the polyketide. This PKS stage completed by the action of dehydrogenase mokE, which catalyzes the NADPH-dependent reduction of the unsaturated tetra-, penta- and heptaketide intermediates that arise during the mokA-mediated biosynthesis of the nonaketide chain and leads to dihydromonacolin L. Covalently bound dihydromonacolin L is released from mokA by the mokD esterase. Conversion of dihydromonacolin L into monacolin L and then monacolin J is subsequently performed with the participation of molecular oxygen and P450 monoogygenase mokC. Finally, mokF performs the conversion of monacoline J to monacoline K through the addition of the side-chain diketide moiety (2R)-2-methylbutanoate produced by the diketide synthase mokB. This Monascus pilosus (Red mold) protein is Esterase mokD.